Consider the following 269-residue polypeptide: Cell wall protein TIR3 (269 aa).

A signal peptide spans 1-22 (MSFTKIAALLAVAAASTQLVSA). The interval 128–242 (SGSESATASS…TNSSSSATSK (115 aa)) is disordered. N-linked (GlcNAc...) asparagine glycosylation is present at N234. G245 carries GPI-anchor amidated glycine lipidation. Positions 246 to 269 (AAMDMGFFSAGVGAAIAGAAAMLL) are cleaved as a propeptide — removed in mature form.

The protein belongs to the SRP1/TIP1 family. In terms of processing, extensively O-glycosylated. The GPI-anchor is attached to the protein in the endoplasmic reticulum and serves to target the protein to the cell surface. There, the glucosamine-inositol phospholipid moiety is cleaved off and the GPI-modified mannoprotein is covalently attached via its lipidless GPI glycan remnant to the 1,6-beta-glucan of the outer cell wall layer.

The protein resides in the secreted. It is found in the cell wall. Its subcellular location is the membrane. Component of the cell wall. Required for anaerobic growth. In Saccharomyces cerevisiae (strain ATCC 204508 / S288c) (Baker's yeast), this protein is Cell wall protein TIR3 (TIR3).